The primary structure comprises 470 residues: Cysteine--tRNA ligase (470 aa).

C28 serves as a coordination point for Zn(2+). The 'HIGH' region motif lies at 30 to 40 (PTVYNYIHIGN). 3 residues coordinate Zn(2+): C212, H237, and E241. The 'KMSKS' region signature appears at 271–275 (KMSKS). K274 is a binding site for ATP.

The protein belongs to the class-I aminoacyl-tRNA synthetase family. Monomer. Zn(2+) serves as cofactor.

It is found in the cytoplasm. The catalysed reaction is tRNA(Cys) + L-cysteine + ATP = L-cysteinyl-tRNA(Cys) + AMP + diphosphate. The sequence is that of Cysteine--tRNA ligase from Limosilactobacillus reuteri (strain DSM 20016) (Lactobacillus reuteri).